Reading from the N-terminus, the 98-residue chain is Large ribosomal subunit protein uL23 (98 aa).

Belongs to the universal ribosomal protein uL23 family. In terms of assembly, part of the 50S ribosomal subunit. Contacts protein L29, and trigger factor when it is bound to the ribosome.

Functionally, one of the early assembly proteins it binds 23S rRNA. One of the proteins that surrounds the polypeptide exit tunnel on the outside of the ribosome. Forms the main docking site for trigger factor binding to the ribosome. The polypeptide is Large ribosomal subunit protein uL23 (Lactobacillus gasseri (strain ATCC 33323 / DSM 20243 / BCRC 14619 / CIP 102991 / JCM 1131 / KCTC 3163 / NCIMB 11718 / NCTC 13722 / AM63)).